We begin with the raw amino-acid sequence, 315 residues long: T-box transcription factor tbx-8 (315 aa).

The segment at residues glutamate 11–glutamate 195 is a DNA-binding region (T-box). The segment covering phenylalanine 193–arginine 203 has biased composition (basic and acidic residues). Disordered regions lie at residues phenylalanine 193–proline 235 and proline 293–valine 315. Residues serine 205 to proline 225 are compositionally biased toward low complexity. Acidic residues predominate over residues glutamine 305–valine 315.

The protein resides in the nucleus. Functionally, transcription factor. Involved in the control of early morphogenesis of the intestine, hypodermis and body-wall muscle. Involved in regulating expression of vab-7. Appears to have partially redundant function to tbx-9. The sequence is that of T-box transcription factor tbx-8 (tbx-8) from Caenorhabditis elegans.